Here is a 593-residue protein sequence, read N- to C-terminus: NADH-quinone oxidoreductase subunit C/D (593 aa).

The tract at residues 1-184 is NADH dehydrogenase I subunit C; sequence MTADNAIFIP…DPYSLTLAKQ (184 aa). An NADH dehydrogenase I subunit D region spans residues 208–593; sequence DYMFLNLGPN…IDFVMADVDR (386 aa).

It in the N-terminal section; belongs to the complex I 30 kDa subunit family. This sequence in the C-terminal section; belongs to the complex I 49 kDa subunit family. As to quaternary structure, NDH-1 is composed of 13 different subunits. Subunits NuoB, CD, E, F, and G constitute the peripheral sector of the complex.

Its subcellular location is the cell inner membrane. The catalysed reaction is a quinone + NADH + 5 H(+)(in) = a quinol + NAD(+) + 4 H(+)(out). In terms of biological role, NDH-1 shuttles electrons from NADH, via FMN and iron-sulfur (Fe-S) centers, to quinones in the respiratory chain. The immediate electron acceptor for the enzyme in this species is believed to be ubiquinone. Couples the redox reaction to proton translocation (for every two electrons transferred, four hydrogen ions are translocated across the cytoplasmic membrane), and thus conserves the redox energy in a proton gradient. The polypeptide is NADH-quinone oxidoreductase subunit C/D (Pseudomonas putida (strain ATCC 47054 / DSM 6125 / CFBP 8728 / NCIMB 11950 / KT2440)).